The primary structure comprises 263 residues: N-glycosylase/DNA lyase (263 aa).

3 residues coordinate 8-oxoguanine: Gln43, Ser71, and Trp82. Positions 139–204 (RRYYFENMMG…EDVRIKAYTE (66 aa)) are helix-hairpin-helix. The active-site Schiff-base intermediate with DNA is the Lys164. Positions 168 and 194 each coordinate 8-oxoguanine. Asp196 is an active-site residue. Asp230 and Trp234 together coordinate 8-oxoguanine.

It belongs to the archaeal N-glycosylase/DNA lyase (AGOG) family.

It carries out the reaction 2'-deoxyribonucleotide-(2'-deoxyribose 5'-phosphate)-2'-deoxyribonucleotide-DNA = a 3'-end 2'-deoxyribonucleotide-(2,3-dehydro-2,3-deoxyribose 5'-phosphate)-DNA + a 5'-end 5'-phospho-2'-deoxyribonucleoside-DNA + H(+). Functionally, DNA repair enzyme that is part of the base excision repair (BER) pathway; protects from oxidative damage by removing the major product of DNA oxidation, 8-oxoguanine (GO), from single- and double-stranded DNA substrates. The chain is N-glycosylase/DNA lyase from Thermococcus kodakarensis (strain ATCC BAA-918 / JCM 12380 / KOD1) (Pyrococcus kodakaraensis (strain KOD1)).